Here is a 217-residue protein sequence, read N- to C-terminus: Zinc finger CCHC-type and RNA-binding motif-containing protein 1 (217 aa).

The RRM domain maps to 10-88 (STVYVSNLPF…RVIKASIAID (79 aa)). A CCHC-type zinc finger spans residues 105–122 (SKCYECGESGHLSYACPK). The disordered stretch occupies residues 120-217 (CPKNMLGERE…YFSDEEELSD (98 aa)). Over residues 145-163 (PEEEIEEVEESEDEGEDPA) the composition is skewed to acidic residues. Phosphoserine is present on residues Ser-155, Ser-210, and Ser-216.

In terms of assembly, component of the U11/U12 snRNPs that are part of the U12-type spliceosome. Interacts with ZRSR1.

Its subcellular location is the nucleus. The protein localises to the nucleoplasm. The chain is Zinc finger CCHC-type and RNA-binding motif-containing protein 1 (ZCRB1) from Bos taurus (Bovine).